Here is a 1030-residue protein sequence, read N- to C-terminus: Subtilin biosynthesis protein SpaB (1030 aa).

This sequence to S.epidermidis EpiB and L.lactis NisB.

The protein resides in the cell membrane. Functionally, involved in the post-translational modification of the lantibiotic subtilin. This chain is Subtilin biosynthesis protein SpaB (spaB), found in Bacillus subtilis.